A 365-amino-acid chain; its full sequence is Protein mab-21 (365 aa).

It belongs to the mab-21 family.

In Anopheles gambiae (African malaria mosquito), this protein is Protein mab-21 (mab-21).